The sequence spans 129 residues: Small ribosomal subunit protein uS11 (129 aa).

Belongs to the universal ribosomal protein uS11 family. Part of the 30S ribosomal subunit. Interacts with proteins S7 and S18. Binds to IF-3.

Functionally, located on the platform of the 30S subunit, it bridges several disparate RNA helices of the 16S rRNA. Forms part of the Shine-Dalgarno cleft in the 70S ribosome. In Cereibacter sphaeroides (strain ATCC 17025 / ATH 2.4.3) (Rhodobacter sphaeroides), this protein is Small ribosomal subunit protein uS11.